Reading from the N-terminus, the 426-residue chain is Histidine--tRNA ligase (426 aa).

Belongs to the class-II aminoacyl-tRNA synthetase family. In terms of assembly, homodimer.

The protein localises to the cytoplasm. It carries out the reaction tRNA(His) + L-histidine + ATP = L-histidyl-tRNA(His) + AMP + diphosphate + H(+). The polypeptide is Histidine--tRNA ligase (Streptococcus pyogenes serotype M49 (strain NZ131)).